The sequence spans 186 residues: Large ribosomal subunit protein uL5 (186 aa).

Belongs to the universal ribosomal protein uL5 family. As to quaternary structure, part of the 50S ribosomal subunit; part of the 5S rRNA/L5/L18/L25 subcomplex. Contacts the 5S rRNA and the P site tRNA. Forms a bridge to the 30S subunit in the 70S ribosome.

In terms of biological role, this is one of the proteins that bind and probably mediate the attachment of the 5S RNA into the large ribosomal subunit, where it forms part of the central protuberance. In the 70S ribosome it contacts protein S13 of the 30S subunit (bridge B1b), connecting the 2 subunits; this bridge is implicated in subunit movement. Contacts the P site tRNA; the 5S rRNA and some of its associated proteins might help stabilize positioning of ribosome-bound tRNAs. This Porphyromonas gingivalis (strain ATCC 33277 / DSM 20709 / CIP 103683 / JCM 12257 / NCTC 11834 / 2561) protein is Large ribosomal subunit protein uL5.